We begin with the raw amino-acid sequence, 218 residues long: Small ribosomal subunit protein uS3c (218 aa).

In terms of domain architecture, KH type-2 spans 43 to 118 (IKNYVQKNMK…KLNISITRIE (76 aa)).

Belongs to the universal ribosomal protein uS3 family. Part of the 30S ribosomal subunit.

The protein localises to the plastid. The protein resides in the chloroplast. This Populus alba (White poplar) protein is Small ribosomal subunit protein uS3c (rps3).